Here is a 124-residue protein sequence, read N- to C-terminus: Glycine cleavage system H protein (124 aa).

The 83-residue stretch at 22-104 (TATVGITDFA…YGDGWMIEIE (83 aa)) folds into the Lipoyl-binding domain. N6-lipoyllysine is present on Lys63.

It belongs to the GcvH family. In terms of assembly, the glycine cleavage system is composed of four proteins: P, T, L and H. (R)-lipoate is required as a cofactor.

Functionally, the glycine cleavage system catalyzes the degradation of glycine. The H protein shuttles the methylamine group of glycine from the P protein to the T protein. The sequence is that of Glycine cleavage system H protein from Salinibacter ruber (strain DSM 13855 / M31).